The chain runs to 199 residues: Probable chemoreceptor glutamine deamidase CheD (199 aa).

The protein belongs to the CheD family.

The catalysed reaction is L-glutaminyl-[protein] + H2O = L-glutamyl-[protein] + NH4(+). Probably deamidates glutamine residues to glutamate on methyl-accepting chemotaxis receptors (MCPs), playing an important role in chemotaxis. This is Probable chemoreceptor glutamine deamidase CheD from Nitratidesulfovibrio vulgaris (strain ATCC 29579 / DSM 644 / CCUG 34227 / NCIMB 8303 / VKM B-1760 / Hildenborough) (Desulfovibrio vulgaris).